The sequence spans 379 residues: Alanine racemase (379 aa).

Lys40 serves as the catalytic Proton acceptor; specific for D-alanine. Lys40 is subject to N6-(pyridoxal phosphate)lysine. Arg138 is a binding site for substrate. Tyr267 functions as the Proton acceptor; specific for L-alanine in the catalytic mechanism. Position 315 (Met315) interacts with substrate.

The protein belongs to the alanine racemase family. It depends on pyridoxal 5'-phosphate as a cofactor.

The enzyme catalyses L-alanine = D-alanine. The protein operates within amino-acid biosynthesis; D-alanine biosynthesis; D-alanine from L-alanine: step 1/1. Catalyzes the interconversion of L-alanine and D-alanine. May also act on other amino acids. This chain is Alanine racemase (alr), found in Halothermothrix orenii (strain H 168 / OCM 544 / DSM 9562).